Reading from the N-terminus, the 555-residue chain is Chaperonin GroEL 2 (555 aa).

ATP-binding positions include 29–32 (TLGP), 86–90 (DGTTT), G414, 480–482 (NAL), and D496.

The protein belongs to the chaperonin (HSP60) family. Forms a cylinder of 14 subunits composed of two heptameric rings stacked back-to-back. Interacts with the co-chaperonin GroES.

It is found in the cytoplasm. It carries out the reaction ATP + H2O + a folded polypeptide = ADP + phosphate + an unfolded polypeptide.. Functionally, together with its co-chaperonin GroES, plays an essential role in assisting protein folding. The GroEL-GroES system forms a nano-cage that allows encapsulation of the non-native substrate proteins and provides a physical environment optimized to promote and accelerate protein folding. This chain is Chaperonin GroEL 2, found in Synechococcus sp. (strain ATCC 27144 / PCC 6301 / SAUG 1402/1) (Anacystis nidulans).